The following is a 449-amino-acid chain: Glutamyl-tRNA reductase (449 aa).

Substrate is bound by residues 58 to 61 (TCNR), Ser121, 126 to 128 (ETQ), and Gln132. Catalysis depends on Cys59, which acts as the Nucleophile. 203-208 (GLGEMA) is an NADP(+) binding site.

The protein belongs to the glutamyl-tRNA reductase family. Homodimer.

The catalysed reaction is (S)-4-amino-5-oxopentanoate + tRNA(Glu) + NADP(+) = L-glutamyl-tRNA(Glu) + NADPH + H(+). Its pathway is porphyrin-containing compound metabolism; protoporphyrin-IX biosynthesis; 5-aminolevulinate from L-glutamyl-tRNA(Glu): step 1/2. In terms of biological role, catalyzes the NADPH-dependent reduction of glutamyl-tRNA(Glu) to glutamate 1-semialdehyde (GSA). This Helicobacter pylori (strain P12) protein is Glutamyl-tRNA reductase.